We begin with the raw amino-acid sequence, 160 residues long: Large ribosomal subunit protein uL15 (160 aa).

Residues 1-13 (MKLNEIRDNEGAR) show a composition bias toward basic and acidic residues. The disordered stretch occupies residues 1–41 (MKLNEIRDNEGARKSRIRVGRGIGSGKGKTGGRGVKGQKSR). Over residues 21–35 (RGIGSGKGKTGGRGV) the composition is skewed to gly residues.

The protein belongs to the universal ribosomal protein uL15 family. As to quaternary structure, part of the 50S ribosomal subunit.

Functionally, binds to the 23S rRNA. The protein is Large ribosomal subunit protein uL15 of Parvibaculum lavamentivorans (strain DS-1 / DSM 13023 / NCIMB 13966).